The primary structure comprises 440 residues: Chromosomal replication initiator protein DnaA (440 aa).

The domain I, interacts with DnaA modulators stretch occupies residues 1–74; the sequence is MNPSQILENL…VQSGNKAIIN (74 aa). The domain II stretch occupies residues 74–99; the sequence is NIQAQSAKQSNKSTKIDIAHIKAQST. Positions 100 to 316 are domain III, AAA+ region; the sequence is ILNPSFTFDS…GIIISLNAYA (217 aa). Glycine 146, glycine 148, lysine 149, and threonine 150 together coordinate ATP. Positions 317–440 are domain IV, binds dsDNA; that stretch reads TILGQEITLE…KNKILVKSQS (124 aa).

This sequence belongs to the DnaA family. As to quaternary structure, oligomerizes as a right-handed, spiral filament on DNA at oriC.

Its subcellular location is the cytoplasm. Functionally, plays an essential role in the initiation and regulation of chromosomal replication. ATP-DnaA binds to the origin of replication (oriC) to initiate formation of the DNA replication initiation complex once per cell cycle. Binds the DnaA box (a 9 base pair repeat at the origin) and separates the double-stranded (ds)DNA. Forms a right-handed helical filament on oriC DNA; dsDNA binds to the exterior of the filament while single-stranded (ss)DNA is stabiized in the filament's interior. The ATP-DnaA-oriC complex binds and stabilizes one strand of the AT-rich DNA unwinding element (DUE), permitting loading of DNA polymerase. After initiation quickly degrades to an ADP-DnaA complex that is not apt for DNA replication. Binds acidic phospholipids. This Campylobacter jejuni (strain RM1221) protein is Chromosomal replication initiator protein DnaA.